The primary structure comprises 445 residues: Asparagine--tRNA ligase (445 aa).

Belongs to the class-II aminoacyl-tRNA synthetase family. In terms of assembly, homodimer.

The protein resides in the cytoplasm. The catalysed reaction is tRNA(Asn) + L-asparagine + ATP = L-asparaginyl-tRNA(Asn) + AMP + diphosphate + H(+). This is Asparagine--tRNA ligase from Deinococcus deserti (strain DSM 17065 / CIP 109153 / LMG 22923 / VCD115).